We begin with the raw amino-acid sequence, 380 residues long: Cytochrome b (380 aa).

A run of 4 helical transmembrane segments spans residues 34–54 (FGSLLGICLLTQILTGLLLAM), 78–99 (WLIRNLHANGASFFFICIYLHI), 114–134 (WNTGVILLLTLMATAFVGYVL), and 179–199 (FFALHFLLPFMIAGLTLIHLT). 2 residues coordinate heme b: H84 and H98. Heme b contacts are provided by H183 and H197. Residue H202 coordinates a ubiquinone. Transmembrane regions (helical) follow at residues 227–247 (LKDILGFMLMLLPLTTLALFS), 289–309 (LGGVLALAASVLVLFLAPFLH), 321–341 (LSQLLFWILVANLFILTWVGS), and 348–368 (FIIIGQLASITYFTILLILFP).

Belongs to the cytochrome b family. The cytochrome bc1 complex contains 11 subunits: 3 respiratory subunits (MT-CYB, CYC1 and UQCRFS1), 2 core proteins (UQCRC1 and UQCRC2) and 6 low-molecular weight proteins (UQCRH/QCR6, UQCRB/QCR7, UQCRQ/QCR8, UQCR10/QCR9, UQCR11/QCR10 and a cleavage product of UQCRFS1). This cytochrome bc1 complex then forms a dimer. Heme b serves as cofactor.

Its subcellular location is the mitochondrion inner membrane. Functionally, component of the ubiquinol-cytochrome c reductase complex (complex III or cytochrome b-c1 complex) that is part of the mitochondrial respiratory chain. The b-c1 complex mediates electron transfer from ubiquinol to cytochrome c. Contributes to the generation of a proton gradient across the mitochondrial membrane that is then used for ATP synthesis. The sequence is that of Cytochrome b (MT-CYB) from Ardenna tenuirostris (Short-tailed shearwater).